The sequence spans 618 residues: Uptake hydrogenase large subunit (618 aa).

Residues cysteine 75, cysteine 78, cysteine 597, and cysteine 600 each coordinate Ni(2+).

The protein belongs to the [NiFe]/[NiFeSe] hydrogenase large subunit family. Heterodimer of a large and a small subunit. Requires Ni(2+) as cofactor.

The protein localises to the cell membrane. The catalysed reaction is H2 + A = AH2. This enzyme recycles the H(2) produced by nitrogenase to increase the production of ATP and to protect nitrogenase against inhibition or damage by O(2) under carbon- or phosphate-limited conditions. The protein is Uptake hydrogenase large subunit (hupB) of Rubrivivax gelatinosus (Rhodocyclus gelatinosus).